Consider the following 393-residue polypeptide: NAD(P)H-quinone oxidoreductase subunit H, chloroplastic (393 aa).

It belongs to the complex I 49 kDa subunit family. In terms of assembly, NDH is composed of at least 16 different subunits, 5 of which are encoded in the nucleus.

The protein resides in the plastid. It is found in the chloroplast thylakoid membrane. The enzyme catalyses a plastoquinone + NADH + (n+1) H(+)(in) = a plastoquinol + NAD(+) + n H(+)(out). It catalyses the reaction a plastoquinone + NADPH + (n+1) H(+)(in) = a plastoquinol + NADP(+) + n H(+)(out). Its function is as follows. NDH shuttles electrons from NAD(P)H:plastoquinone, via FMN and iron-sulfur (Fe-S) centers, to quinones in the photosynthetic chain and possibly in a chloroplast respiratory chain. The immediate electron acceptor for the enzyme in this species is believed to be plastoquinone. Couples the redox reaction to proton translocation, and thus conserves the redox energy in a proton gradient. The chain is NAD(P)H-quinone oxidoreductase subunit H, chloroplastic from Lobularia maritima (Sweet alyssum).